We begin with the raw amino-acid sequence, 391 residues long: S-adenosylmethionine synthase (391 aa).

His-19 contacts ATP. Asp-21 is a binding site for Mg(2+). Glu-47 serves as a coordination point for K(+). L-methionine is bound by residues Glu-60 and Gln-103. Positions 103-113 (QSPDIAQGVDR) are flexible loop. ATP contacts are provided by residues 168 to 170 (DGK), 236 to 237 (RF), Asp-245, 251 to 252 (RK), Ala-268, and Lys-272. Asp-245 contacts L-methionine. Lys-276 contributes to the L-methionine binding site.

Belongs to the AdoMet synthase family. Homotetramer; dimer of dimers. The cofactor is Mg(2+). K(+) serves as cofactor.

It localises to the cytoplasm. It catalyses the reaction L-methionine + ATP + H2O = S-adenosyl-L-methionine + phosphate + diphosphate. It functions in the pathway amino-acid biosynthesis; S-adenosyl-L-methionine biosynthesis; S-adenosyl-L-methionine from L-methionine: step 1/1. In terms of biological role, catalyzes the formation of S-adenosylmethionine (AdoMet) from methionine and ATP. The overall synthetic reaction is composed of two sequential steps, AdoMet formation and the subsequent tripolyphosphate hydrolysis which occurs prior to release of AdoMet from the enzyme. The protein is S-adenosylmethionine synthase of Oleidesulfovibrio alaskensis (strain ATCC BAA-1058 / DSM 17464 / G20) (Desulfovibrio alaskensis).